The primary structure comprises 357 residues: RNA-binding protein 4B (357 aa).

2 RRM domains span residues 2-72 (VKLF…ASKN) and 78-148 (TKLH…LSTS). Residues 160-177 (SGCYRCGKEGHWSKECPV) form a CCHC-type zinc finger. The interval 196-357 (AVRTPYTMGY…YVDRTRYSAF (162 aa)) is interaction with TNPO3.

Interacts with TNPO3, which may mediate nuclear import of the protein. Expressed in the suprachiasmatic nucleus (SCN) (at protein level). Expressed in the suprachiasmatic nucleus (SCN).

Its subcellular location is the nucleus. The protein localises to the nucleolus. In terms of biological role, required for the translational activation of PER1 mRNA in response to circadian clock. Binds directly to the 3'-UTR of the PER1 mRNA. In Mus musculus (Mouse), this protein is RNA-binding protein 4B (Rbm4b).